A 385-amino-acid chain; its full sequence is 3,5,7-trioxododecanoyl-CoA synthase (385 aa).

Cys-157 is a catalytic residue.

Belongs to the thiolase-like superfamily. Chalcone/stilbene synthases family. As to expression, expressed in bracts, flowers and young leaves. Not detected in mature leaves, roots and stems. Expressed in glandular trichomes.

The catalysed reaction is hexanoyl-CoA + 3 malonyl-CoA + 3 H(+) = 3,5,7-trioxododecanoyl-CoA + 3 CO2 + 3 CoA. It catalyses the reaction 3,5,7-trioxododecanoyl-CoA = olivetol + CO2 + CoA. It functions in the pathway secondary metabolite biosynthesis; terpenoid biosynthesis. In terms of biological role, involved in the biosynthesis of cannabinoids-related terpenophenolic natural products, which have pharmacological activity. Polyketide synthase responsible for olivetol biosynthesis, from a C(12)-polyketide, probably 3,5,7-trioxododecanoyl-CoA. Catalyzes the first step in the cannabinoids biosynthetic pathway. The preferred substrate is hexanoyl-CoA, but also accepts CoA esters with C4 to C8 aliphatic side chains. When using malonyl-CoA and hexanoyl-CoA as substrates, produces undetermined compounds distinct form olivetol or olivetolic acid that could be hexanoyl triacetic acid lactone (HTAL) and pentyl diacetic acid lactone (PDAL). Produces olivetolic acid when acting in concert with olivetolic acid cyclase (OAC). This Cannabis sativa (Hemp) protein is 3,5,7-trioxododecanoyl-CoA synthase.